The sequence spans 98 residues: Cuticle protein 67, isoform A (98 aa).

6 tandem repeats follow at residues 7–10 (AAPA), 15–18 (AAPA), 22–25 (AAPA), 79–82 (AAPA), 86–89 (AAPA), and 92–95 (AAPA).

Component of the cuticle of migratory locust which contains more than 100 different structural proteins. This chain is Cuticle protein 67, isoform A, found in Locusta migratoria (Migratory locust).